The sequence spans 1941 residues: Myosin-7B (1941 aa).

The 51-residue stretch at 30–80 (DGKKRVWVPDEQDAYVEAEVKTEATGGKVTVETKDQKVLTVRETEMQPMNP) folds into the Myosin N-terminal SH3-like domain. The region spanning 84-785 (DLLEDMAMMT…LLGILEELRD (702 aa)) is the Myosin motor domain. 177-184 (GESGAGKT) contacts ATP. Actin-binding stretches follow at residues 662-684 (LNKL…VPNE) and 764-778 (QFGH…GLLG). The 30-residue stretch at 788 to 817 (LAKVLTLLQARSRGRLMRLEYQRMLGGRDA) folds into the IQ domain. Residues 846-1935 (LLRSAQAEEE…KLRARSRDAL (1090 aa)) adopt a coiled-coil conformation. The tract at residues 1887 to 1941 (RQFEEAEQQASTNLAKYRKAQHELDDAEERADMAETQANKLRARSRDALGPKHKE) is disordered. Residues 1930 to 1941 (RSRDALGPKHKE) show a composition bias toward basic and acidic residues.

The protein belongs to the TRAFAC class myosin-kinesin ATPase superfamily. Myosin family. Muscle myosin is a hexameric protein that consists of 2 heavy chain subunits (MHC), 2 alkali light chain subunits (MLC) and 2 regulatory light chain subunits (MLC-2).

It is found in the membrane. Functionally, involved in muscle contraction. The protein is Myosin-7B (Myh7b) of Mus musculus (Mouse).